The chain runs to 294 residues: UDP-3-O-acyl-N-acetylglucosamine deacetylase (294 aa).

Positions 75, 232, and 236 each coordinate Zn(2+). Histidine 259 acts as the Proton donor in catalysis.

This sequence belongs to the LpxC family. Zn(2+) is required as a cofactor.

The enzyme catalyses a UDP-3-O-[(3R)-3-hydroxyacyl]-N-acetyl-alpha-D-glucosamine + H2O = a UDP-3-O-[(3R)-3-hydroxyacyl]-alpha-D-glucosamine + acetate. It functions in the pathway glycolipid biosynthesis; lipid IV(A) biosynthesis; lipid IV(A) from (3R)-3-hydroxytetradecanoyl-[acyl-carrier-protein] and UDP-N-acetyl-alpha-D-glucosamine: step 2/6. Catalyzes the hydrolysis of UDP-3-O-myristoyl-N-acetylglucosamine to form UDP-3-O-myristoylglucosamine and acetate, the committed step in lipid A biosynthesis. The protein is UDP-3-O-acyl-N-acetylglucosamine deacetylase of Campylobacter jejuni subsp. jejuni serotype O:2 (strain ATCC 700819 / NCTC 11168).